The primary structure comprises 345 residues: NADPH dehydrogenase (345 aa).

23 to 26 (SPMC) is a binding site for FMN. Y28 provides a ligand contact to substrate. Residues A60 and Q102 each contribute to the FMN site. Substrate is bound at residue 164–167 (HGAH). FMN-binding positions include R215 and 307–308 (GR).

Belongs to the NADH:flavin oxidoreductase/NADH oxidase family. NamA subfamily. Homotetramer. FMN is required as a cofactor.

It catalyses the reaction A + NADPH + H(+) = AH2 + NADP(+). Its function is as follows. Catalyzes the reduction of the double bond of an array of alpha,beta-unsaturated aldehydes and ketones. It also reduces the nitro group of nitroester and nitroaromatic compounds. It could have a role in detoxification processes. The sequence is that of NADPH dehydrogenase from Bacillus cereus (strain ATCC 14579 / DSM 31 / CCUG 7414 / JCM 2152 / NBRC 15305 / NCIMB 9373 / NCTC 2599 / NRRL B-3711).